Consider the following 161-residue polypeptide: Vasotocin-neurophysin VT (161 aa).

Residues M1–G22 form the signal peptide. Cysteines 23 and 28 form a disulfide. G31 is modified (glycine amide). Disulfide bonds link C43-C91, C46-C58, C52-C81, C59-C71, C99-C111, C105-C123, and C112-C117.

The protein belongs to the vasopressin/oxytocin family.

The protein resides in the secreted. In terms of biological role, vasotocin is an antidiuretic hormone. The protein is Vasotocin-neurophysin VT of Eptatretus stoutii (Pacific hagfish).